The sequence spans 924 residues: Mediator of RNA polymerase II transcription subunit 16 (924 aa).

This sequence belongs to the Mediator complex subunit 16 family. Component of the Mediator complex.

The protein localises to the nucleus. Its function is as follows. Component of the Mediator complex, a coactivator involved in the regulated transcription of nearly all RNA polymerase II-dependent genes. Mediator functions as a bridge to convey information from gene-specific regulatory proteins to the basal RNA polymerase II transcription machinery. Mediator is recruited to promoters by direct interactions with regulatory proteins and serves as a scaffold for the assembly of a functional preinitiation complex with RNA polymerase II and the general transcription factors. The chain is Mediator of RNA polymerase II transcription subunit 16 (SIN4) from Yarrowia lipolytica (strain CLIB 122 / E 150) (Yeast).